We begin with the raw amino-acid sequence, 315 residues long: ATP synthase gamma chain (315 aa).

This sequence belongs to the ATPase gamma chain family. In terms of assembly, F-type ATPases have 2 components, CF(1) - the catalytic core - and CF(0) - the membrane proton channel. CF(1) has five subunits: alpha(3), beta(3), gamma(1), delta(1), epsilon(1). CF(0) has three main subunits: a, b and c.

The protein localises to the cellular thylakoid membrane. Functionally, produces ATP from ADP in the presence of a proton gradient across the membrane. The gamma chain is believed to be important in regulating ATPase activity and the flow of protons through the CF(0) complex. The sequence is that of ATP synthase gamma chain from Cyanothece sp. (strain PCC 7425 / ATCC 29141).